A 201-amino-acid chain; its full sequence is MCPRPRRAVLLGLGVAMSAIAGCRETAPSTTQTSDGGPEPTGRSGDTQTDGGGETTRQATVAEGGESATRADETETSELDLREANVVDVTLQSAGGRAVEFSVTLYHDDDGEDGYADWWQVETLAGDRLGRRELLHAHSTAPFTRSETIEVPEGTTCVVVRGHDQTHGYGGQAMVVDTESGATRAVQQGPEPAEFDDGDCP.

An N-terminal signal peptide occupies residues 1-22 (MCPRPRRAVLLGLGVAMSAIAG). Cys23 carries the post-translational modification N-acetylcysteine. Cys23 is lipidated: S-archaeol cysteine. Disordered stretches follow at residues 25–78 (ETAP…ETSE) and 182–201 (ATRA…GDCP). Over residues 69 to 78 (TRADETETSE) the composition is skewed to basic and acidic residues.

It is found in the cell membrane. In Halomicrobium mukohataei (strain ATCC 700874 / DSM 12286 / JCM 9738 / NCIMB 13541) (Haloarcula mukohataei), this protein is Putative lipoprotein Hmuk_2215.